The sequence spans 478 residues: MAASQLAALEGVDSGPRVPGASPGFLYSEGQRLALEALLSKGAEAFQTCVQREELWPFLSADEVQGLAAAAEDWTVAKQEPSGMAEGATTTDVDAGSLSYWPGQSEQPAPVLRLGWPVDSAWKGITRAQLYTQPPGEGQPPLKELVRLEIQAAHKLVAVVMDVFTDPDLLLDLVDAATRRWVPVYLLLDRQQLPAFLELAQQLGVNPWNTENVDVRVVRGCSFQSRWRRQVSGTVREKFVLLDGERVISGSYSFTWSDARLHRGLVTLLTGEIVDAFSLEFRTLYAASCPLPPAPPQKPSVIGGLQRGRSPHRVSRRRSVAPASPPPPDGPLAHRLAACRVSPATPGPALSDILRSVQRARTPSGPPARPSRSMWDLSRLSQLSGSSDGDNELKKSWGSKDTPAKALMRQRGTGGGPWGEVDSRPPWGGALPLPPAHRLRYLSPARRRFGGDATFKLQEPRGVRPSDWAPRAGLGGQP.

The interval 1-293 (MAASQLAALE…LYAASCPLPP (293 aa)) is DUF1669. Disordered stretches follow at residues 292 to 334 (PPAP…PLAH), 359 to 436 (RART…LPPA), and 452 to 478 (DATFKLQEPRGVRPSDWAPRAGLGGQP). Basic residues predominate over residues 309–319 (RSPHRVSRRRS). Positions 379–388 (RLSQLSGSSD) are enriched in polar residues.

Belongs to the FAM83 family. Directly interacts (via DUF1669) with CSNK1A1, CSNK1A1L, CSNK1D and CSNK1E. May interact with RAF1.

Its subcellular location is the cytoplasm. It localises to the perinuclear region. Its function is as follows. May play a role in MAPK signaling. In Homo sapiens (Human), this protein is Protein FAM83E.